The chain runs to 204 residues: Threonylcarbamoyl-AMP synthase (204 aa).

One can recognise a YrdC-like domain in the interval 10-204 (ADELDLVANY…KDLLAGHILR (195 aa)).

This sequence belongs to the SUA5 family. TsaC subfamily.

It is found in the cytoplasm. It catalyses the reaction L-threonine + hydrogencarbonate + ATP = L-threonylcarbamoyladenylate + diphosphate + H2O. Functionally, required for the formation of a threonylcarbamoyl group on adenosine at position 37 (t(6)A37) in tRNAs that read codons beginning with adenine. Catalyzes the conversion of L-threonine, HCO(3)(-)/CO(2) and ATP to give threonylcarbamoyl-AMP (TC-AMP) as the acyladenylate intermediate, with the release of diphosphate. The chain is Threonylcarbamoyl-AMP synthase from Moraxella catarrhalis (strain BBH18).